A 345-amino-acid polypeptide reads, in one-letter code: Selenide, water dikinase (345 aa).

C16 is an active-site residue. ATP-binding positions include K19 and 46–48; that span reads TSD. Position 49 (D49) interacts with Mg(2+). ATP is bound by residues D66, D89, and 136–138; that span reads GHT. Mg(2+) is bound at residue D89. Position 224 (D224) interacts with Mg(2+).

The protein belongs to the selenophosphate synthase 1 family. Class I subfamily. As to quaternary structure, homodimer. It depends on Mg(2+) as a cofactor.

The catalysed reaction is hydrogenselenide + ATP + H2O = selenophosphate + AMP + phosphate + 2 H(+). In terms of biological role, synthesizes selenophosphate from selenide and ATP. This is Selenide, water dikinase from Clostridium botulinum (strain Alaska E43 / Type E3).